Consider the following 2133-residue polypeptide: Coagulation factor VIII (2133 aa).

Positions 1–19 are cleaved as a signal peptide; it reads MQLELSTCVFLCLLPLGFS. 4 Plastocyanin-like domains span residues 20–199, 207–357, 399–573, and 583–730; these read AIRR…LLVC, ERTQ…QLRR, KTWV…LLIC, and NQMM…VYSC. F5/8 type A domains follow at residues 20-357 and 399-730; these read AIRR…QLRR and KTWV…VYSC. Cysteine 173 and cysteine 199 are joined by a disulfide. Asparagine 233 and asparagine 259 each carry an N-linked (GlcNAc...) asparagine glycan. Cysteine 547 and cysteine 573 are oxidised to a cystine. An N-linked (GlcNAc...) asparagine glycan is attached at asparagine 601. A sulfotyrosine mark is found at tyrosine 737, tyrosine 738, and tyrosine 742. 2 disordered regions span residues 760–790 and 804–914; these read SFAQ…LDPQ and PSGD…PHPQ. Positions 760–1599 are b; the sequence is SFAQNSRPPS…LISYPDDQEQ (840 aa). Polar residues predominate over residues 761-780; the sequence is FAQNSRPPSASQKQFQTITS. 2 stretches are compositionally biased toward basic and acidic residues: residues 853 to 862 and 868 to 878; these read LRPELHHSAE and EPEKELKKLDS. The segment covering 879-888 has biased composition (low complexity); that stretch reads KMSSSSDLLK. Positions 889-900 are enriched in polar residues; sequence TSPTIPSDTLSA. N-linked (GlcNAc...) asparagine glycosylation is found at asparagine 929, asparagine 985, and asparagine 1025. The disordered stretch occupies residues 1042–1078; it reads LGKNPLSSERGPSPELLTSSGSGKSVKGQSSGQGRIR. Positions 1060–1075 are enriched in low complexity; the sequence is SSGSGKSVKGQSSGQG. Asparagine 1111 is a glycosylation site (N-linked (GlcNAc...) asparagine). The segment at 1160–1179 is disordered; that stretch reads PSVEGFDGGSHAPVPQDSRS. N-linked (GlcNAc...) asparagine glycans are attached at residues asparagine 1181, asparagine 1208, asparagine 1245, asparagine 1265, and asparagine 1335. The tract at residues 1200–1221 is disordered; the sequence is EAPLEAPGNRTGPGPRSAVPRR. 2 disordered regions span residues 1358-1391 and 1406-1441; these read LNKV…KSTA and ESNH…APKP. Residues 1378–1387 show a composition bias toward basic and acidic residues; the sequence is KEWESLEKSP. N-linked (GlcNAc...) asparagine glycans are attached at residues asparagine 1408 and asparagine 1611. 2 consecutive Plastocyanin-like domains span residues 1495-1659 and 1669-1822; these read RTRH…LLIC and GRQV…SKEC. The region spanning 1495-1822 is the F5/8 type A 3 domain; it reads RTRHYFIAAV…TTFLVYSKEC (328 aa). 3 disulfide bridges follow: cysteine 1633–cysteine 1659, cysteine 1822–cysteine 1970, and cysteine 1975–cysteine 2127. F5/8 type C domains are found at residues 1822 to 1970 and 1975 to 2127; these read CQAP…LMGC and CSMP…VLGC. Asparagine 1919 carries N-linked (GlcNAc...) asparagine glycosylation.

Belongs to the multicopper oxidase family. As to quaternary structure, interacts with vWF. vWF binding is essential for the stabilization of F8 in circulation. Proteolytically cleaved by cathepsin CTSG to produce a partially activated form.

It is found in the secreted. The protein localises to the extracellular space. In terms of biological role, factor VIII, along with calcium and phospholipid, acts as a cofactor for factor IXa when it converts factor X to the activated form, factor Xa. The polypeptide is Coagulation factor VIII (F8) (Sus scrofa (Pig)).